Reading from the N-terminus, the 286-residue chain is Beta-lactamase SHV-13 (286 aa).

The N-terminal stretch at 1–21 is a signal peptide; that stretch reads MRYIRLCIISLLATLPLAVHA. The Acyl-ester intermediate role is filled by Ser-66. Cys-73 and Cys-119 are disulfide-bonded. Glu-164 acts as the Proton acceptor in catalysis. 230-232 is a binding site for substrate; sequence KTG.

It belongs to the class-A beta-lactamase family.

The enzyme catalyses a beta-lactam + H2O = a substituted beta-amino acid. With respect to regulation, inhibited 16-fold better by the beta-lactamase inhibitor clavulanic acid than by tazobactam. Broad spectrum beta-lactamase which hydrolyzes penicillins, as well as cephalosporins except cephamycins. Also hydrolyzes aztreonam, but not imipenem. Confers highly resistance to ceftazidime, cefotaxime, aztreonam and piperacillin. The protein is Beta-lactamase SHV-13 (bla) of Klebsiella pneumoniae.